The chain runs to 328 residues: Beta-ketoacyl-[acyl-carrier-protein] synthase III (328 aa).

Residues Cys122 and His255 contribute to the active site. Residues Gln256–Arg260 are ACP-binding. Residue Asn285 is part of the active site.

Belongs to the thiolase-like superfamily. FabH family. Homodimer.

The protein localises to the cytoplasm. It carries out the reaction malonyl-[ACP] + acetyl-CoA + H(+) = 3-oxobutanoyl-[ACP] + CO2 + CoA. The protein operates within lipid metabolism; fatty acid biosynthesis. Its function is as follows. Catalyzes the condensation reaction of fatty acid synthesis by the addition to an acyl acceptor of two carbons from malonyl-ACP. Catalyzes the first condensation reaction which initiates fatty acid synthesis and may therefore play a role in governing the total rate of fatty acid production. Possesses both acetoacetyl-ACP synthase and acetyl transacylase activities. Its substrate specificity determines the biosynthesis of branched-chain and/or straight-chain of fatty acids. The sequence is that of Beta-ketoacyl-[acyl-carrier-protein] synthase III from Polynucleobacter asymbioticus (strain DSM 18221 / CIP 109841 / QLW-P1DMWA-1) (Polynucleobacter necessarius subsp. asymbioticus).